Here is a 60-residue protein sequence, read N- to C-terminus: Large ribosomal subunit protein bL32 (60 aa).

The disordered stretch occupies residues 1–23 (MAVPKRKKSKSRRNMHRSHHAIK).

This sequence belongs to the bacterial ribosomal protein bL32 family.

The chain is Large ribosomal subunit protein bL32 from Wolbachia sp. subsp. Brugia malayi (strain TRS).